The sequence spans 1050 residues: Beta-galactosidase (1050 aa).

2 residues coordinate substrate: asparagine 100 and aspartate 199. Aspartate 199 contributes to the Na(+) binding site. Mg(2+) contacts are provided by glutamate 422, histidine 424, and glutamate 467. Substrate contacts are provided by residues glutamate 467 and 543 to 546 (EYAH). Catalysis depends on glutamate 467, which acts as the Proton donor. The Nucleophile role is filled by glutamate 543. Asparagine 603 lines the Mg(2+) pocket. Na(+)-binding residues include phenylalanine 607 and asparagine 610. The substrate site is built by asparagine 610 and tryptophan 1025.

The protein belongs to the glycosyl hydrolase 2 family. As to quaternary structure, homotetramer. It depends on Mg(2+) as a cofactor. Na(+) serves as cofactor.

It catalyses the reaction Hydrolysis of terminal non-reducing beta-D-galactose residues in beta-D-galactosides.. The chain is Beta-galactosidase from Yersinia pestis bv. Antiqua (strain Angola).